A 1382-amino-acid chain; its full sequence is DNA-directed RNA polymerase subunit beta (1382 aa).

The protein belongs to the RNA polymerase beta chain family. The RNAP catalytic core consists of 2 alpha, 1 beta, 1 beta' and 1 omega subunit. When a sigma factor is associated with the core the holoenzyme is formed, which can initiate transcription.

The enzyme catalyses RNA(n) + a ribonucleoside 5'-triphosphate = RNA(n+1) + diphosphate. Its function is as follows. DNA-dependent RNA polymerase catalyzes the transcription of DNA into RNA using the four ribonucleoside triphosphates as substrates. In Aliarcobacter butzleri (strain RM4018) (Arcobacter butzleri), this protein is DNA-directed RNA polymerase subunit beta.